Consider the following 923-residue polypeptide: Alanine--tRNA ligase (923 aa).

4 residues coordinate Zn(2+): H611, H615, C714, and H718.

It belongs to the class-II aminoacyl-tRNA synthetase family. The cofactor is Zn(2+).

It localises to the cytoplasm. The catalysed reaction is tRNA(Ala) + L-alanine + ATP = L-alanyl-tRNA(Ala) + AMP + diphosphate. Its function is as follows. Catalyzes the attachment of alanine to tRNA(Ala) in a two-step reaction: alanine is first activated by ATP to form Ala-AMP and then transferred to the acceptor end of tRNA(Ala). Also edits incorrectly charged Ser-tRNA(Ala) and Gly-tRNA(Ala) via its editing domain. This chain is Alanine--tRNA ligase, found in Methanosarcina barkeri (strain Fusaro / DSM 804).